Here is a 260-residue protein sequence, read N- to C-terminus: NAD-dependent protein deacetylase (260 aa).

The Deacetylase sirtuin-type domain occupies 9 to 260; the sequence is DDIDGETLDA…QVLPAIVERL (252 aa). The NAD(+) site is built by alanine 35, threonine 39, phenylalanine 46, arginine 47, glutamine 114, isoleucine 116, aspartate 117, and histidine 132. Phenylalanine 46 serves as a coordination point for nicotinamide. Residues isoleucine 116 and aspartate 117 each contribute to the nicotinamide site. The Proton acceptor role is filled by histidine 132. Zn(2+)-binding residues include cysteine 140, cysteine 143, cysteine 166, and cysteine 168. Residues serine 206, serine 207, asparagine 231, aspartate 248, and valine 249 each coordinate NAD(+).

Belongs to the sirtuin family. Class U subfamily. Zn(2+) serves as cofactor.

The protein localises to the cytoplasm. The catalysed reaction is N(6)-acetyl-L-lysyl-[protein] + NAD(+) + H2O = 2''-O-acetyl-ADP-D-ribose + nicotinamide + L-lysyl-[protein]. NAD-dependent protein deacetylase which modulates the activities of several enzymes which are inactive in their acetylated form. Deacetylates the N-terminal lysine residue of Alba, the major archaeal chromatin protein and that, in turn, increases Alba's DNA binding affinity, thereby repressing transcription. The chain is NAD-dependent protein deacetylase from Haloarcula marismortui (strain ATCC 43049 / DSM 3752 / JCM 8966 / VKM B-1809) (Halobacterium marismortui).